Consider the following 1071-residue polypeptide: MAKDQSMSRTASLCQEITVPKTIPVCIQDVFYRRVLEQHDAPAVCAWDGELTYGELDDKSSSLARILAQKGIHRGSFVPLCFDRSLWTAVAMLAVLKAGGVFCFLEPKYPLARLEHMCRHINAKMVLSGESRSELARKLGEHLAVNEDLLATSPSDQELVDVAPNQAAYVAFTSGSTGKPKGILVSHQALVAGILYNDKPMYLNRTSRVLSFASFAFDVSFLEHFWALLVGGCMCIPSESDRENNLLEAIENLQVNWAFLTPSVARVLNPTKLPSLRHLIMGGEPITQTDIDMWSPHVHLIGVYGPAECAGCTTIQSDYGKVESAANIGFPYAVTCWIVDENNHNVLVPTGSIGELVVQGPSLSEGYVNDPEQSAKSYITNPLWLSGSKEAEQQLYKTGDLVRRLSDGSLHFISRKDTQVKINGQRIELGEVEHHTRAVLGGNREVIVEAVKAGRPSSSLVAFIVTDNIPQSSTELFLAPDAGFKDRINTTKSLLRERLPDYMVPETYISINHLPSTVTGKADRKRLREQFTLLTRAQIKAYFGLEDKVKVMPLTEIELKMQRLWAKVLNLDLHEIARDDDWVSLGGDSLGAMQLASLARSEQFFLTVPEIFRHKTISMLCQNIKTDVSETIEEMKPFALLCDHELESDRILQTIADQCQVSQNSIEDAYPITSLQLDASIIPIQWGLNYTLRLEFKLPPTVDPAQLTLAWEMTVASNPVLRTRIVELTKDHYIQAVIRSKIPLENLDSSNMARYEPAVDVWGIGKPLVRVGLQANRFVMLIHHAIYDGQSLPLVFRDISNAYQGQKLALIHFAPFVRWSKSLDAPKRQFWIDKFAGFDGRVFPPVLDPSLDPVESRELTGHLNIVHDAFTATNKIRVTLAIVISWHHGTNDVVFGGVFARRSAPIPDIIDSAVPTTAMLPDRIKLDPDETLRYNLERDQDNILSLMLHEGIDDRDIEQLSPECEAVACKYGTLLAVQPDLATAYPEMFRERDMQYYGPICALNALMQCYLSPESATISLRLSESTMDGVYHWGRFLDEFEAVFHFIQKNPDVKLCYLRRQLDIPNPRSPA.

Residues 33–417 are adenylation; it reads RRVLEQHDAP…GSLHFISRKD (385 aa). A Carrier domain is found at 552–628; the sequence is MPLTEIELKM…MLCQNIKTDV (77 aa). At Ser-589 the chain carries O-(pantetheine 4'-phosphoryl)serine. The segment at 689-961 is condensation; the sequence is NYTLRLEFKL…IDDRDIEQLS (273 aa).

It belongs to the NRP synthetase family.

It catalyses the reaction (2S)-5,5-dimethylpiperidine-2-carboxylate + 10-hydroxy-pre-flavunoidine + ATP = flavunoidine + AMP + diphosphate + H(+). Its pathway is secondary metabolite biosynthesis; terpenoid biosynthesis. Functionally, nonribosomal peptide synthetase; part of the gene cluster that mediates the biosynthesis of flavunoidine, an alkaloidal terpenoid with a tetracyclic cage-like core connected to dimethylcadaverine via a C-N bond and acylated with 5,5-dimethyl-L-pipecolate. The tetracyclic core is synthesized by the terpene cyclase flvE and the cytochrome P450 monooxygenase flvD. The terpene cyclase flvE catalyzes the cyclization of farnesyl pyrophosphate (FPP) to form (1R,4R,5S)-(+)-acoradiene and the cytochrome P450 monooxygenase flvD is then responsible for oxidative conversion of (1R,4R,5S)-(+)-acoradiene into the tetracyclic cage present in the final product flavunoidine. In parallel, the N-methyltransferase flvH dimethylates L-lysine to give N,N-dimethyl-L-Lysin which is decarboxylated by flvG to afford dimethylcadaverine. The terpene cyclase-like protein flvF is the enzyme that attaches the dimethylcadaverine precusor at the C-7 of the tetracyclic cage to yield pre-flavunoidine. The cytochrome monooxygenase flvC hydroxylates the C-10 position of pre-flavunoidine whereas the NRPS flvI acylates the terpenoid core at the hydroxylated C-10 with dimethylpipecolate to yield final flavunoidine. The bifunctional enzyme flvA and the dehydrogenase flvB are responsible for the synthesis of the dimethylpipecolate precursor. The PLP-dependent lyase domain of flvA might use L-O-acetyl-homoserine and alpha-keto-isovalerate to form an intermediary ketone that can cyclize intramolecularly to yield an imine. The imine can be reduced by flvB to yield the 6-carboxylated pipecolate. The C-terminal alpha-KG-dependent oxygenase domain of flvA is then proposed to catalyze the decarboxylation to yield dimethylpipecolate. This Aspergillus flavus (strain ATCC 200026 / FGSC A1120 / IAM 13836 / NRRL 3357 / JCM 12722 / SRRC 167) protein is Nonribosomal peptide synthetase flvI.